The primary structure comprises 594 residues: Cytoplasmic polyadenylation element-binding protein 1 (594 aa).

Residues 1 to 33 (MQHQVKACGDSKSTTRSLQGNRRSGAASLKKPS) form a disordered region. Residues 11-22 (SKSTTRSLQGNR) are compositionally biased toward polar residues. RRM domains follow at residues 257-364 (RKVF…PWRL) and 381-452 (RTVF…HAET). The interval 519–560 (TGDQTRILPRPPHHQSSHYSPRSHQMMNHDSMESSNQSRGNT) is disordered. A compositionally biased stretch (polar residues) spans 535-560 (SHYSPRSHQMMNHDSMESSNQSRGNT).

As to quaternary structure, interacts with fbf-1.

In terms of biological role, cytoplasmic polyadenylation element binding protein that binds to and regulates the translation of specific mRNAs. Essential for progression through meiosis. Involved in spermatogenesis. This chain is Cytoplasmic polyadenylation element-binding protein 1 (cpb-1), found in Caenorhabditis remanei (Caenorhabditis vulgaris).